Here is a 724-residue protein sequence, read N- to C-terminus: Coiled-coil domain-containing protein 175 (724 aa).

Coiled-coil stretches lie at residues 131 to 164 (VEMS…NTAL), 203 to 256 (INLE…RKET), 282 to 373 (VVLS…RQYK), 426 to 534 (ELHR…ERKL), and 565 to 627 (QLQV…QLRE).

The sequence is that of Coiled-coil domain-containing protein 175 (CCDC175) from Bos taurus (Bovine).